We begin with the raw amino-acid sequence, 178 residues long: Large ribosomal subunit protein uL6 (178 aa).

This sequence belongs to the universal ribosomal protein uL6 family. Part of the 50S ribosomal subunit.

Functionally, this protein binds to the 23S rRNA, and is important in its secondary structure. It is located near the subunit interface in the base of the L7/L12 stalk, and near the tRNA binding site of the peptidyltransferase center. In Campylobacter jejuni subsp. jejuni serotype O:2 (strain ATCC 700819 / NCTC 11168), this protein is Large ribosomal subunit protein uL6.